Reading from the N-terminus, the 348-residue chain is uncharacterized protein (348 aa).

The protein localises to the virion. This is an uncharacterized protein from Acanthamoeba polyphaga mimivirus (APMV).